A 125-amino-acid chain; its full sequence is Succinate dehydrogenase assembly factor 3, mitochondrial (125 aa).

Residues 1–30 (MPGKHVSRVRALYRRILLLHRALPPDLKAL) constitute a mitochondrion transit peptide.

This sequence belongs to the complex I LYR family. SDHAF3 subfamily. As to quaternary structure, interacts with Sdhb within an Sdha-Sdhb subcomplex.

The protein resides in the mitochondrion matrix. Functionally, plays an essential role in the assembly of succinate dehydrogenase (SDH), an enzyme complex (also referred to as respiratory complex II) that is a component of both the tricarboxylic acid (TCA) cycle and the mitochondrial electron transport chain, and which couples the oxidation of succinate to fumarate with the reduction of ubiquinone (coenzyme Q) to ubiquinol. Promotes maturation of the iron-sulfur protein subunit Sdhb of the SDH catalytic dimer, protecting it from the deleterious effects of oxidants. May act together with SDHAF1. The protein is Succinate dehydrogenase assembly factor 3, mitochondrial of Mus musculus (Mouse).